We begin with the raw amino-acid sequence, 59 residues long: MTMLKLALFFLVVSLIAGLFGFTGISAASAGIAKILFVIFLIVFVVLLVMALAAGKAIL.

2 helical membrane passes run 6–26 (LALF…TGIS) and 35–55 (ILFV…LAAG).

The protein belongs to the UPF0391 family.

It localises to the cell membrane. This chain is UPF0391 membrane protein GbCGDNIH1_2123, found in Granulibacter bethesdensis (strain ATCC BAA-1260 / CGDNIH1).